Consider the following 79-residue polypeptide: uncharacterized protein (79 aa).

The signal sequence occupies residues Met1 to Ala33.

This is an uncharacterized protein from Salmonella typhi.